Reading from the N-terminus, the 273-residue chain is Homeobox protein Hox-C13b (273 aa).

A DNA-binding region (homeobox) is located at residues 201–260; it reads GRKKRVPYTKIQLKELEKEYAASKFITKDRRRRISATTSLSERQVTIWFQNRRVKEKKFV.

The protein belongs to the Abd-B homeobox family.

It is found in the nucleus. Functionally, sequence-specific transcription factor which is part of a developmental regulatory system that provides cells with specific positional identities on the anterior-posterior axis. Plays a role in early embryonic development. The chain is Homeobox protein Hox-C13b (hoxc13b) from Danio rerio (Zebrafish).